Consider the following 1865-residue polypeptide: Transcription initiation factor TFIID subunit 1 (1865 aa).

The segment at 1 to 27 (MLLPATGASRSAAIMSDTDSDEDSSGG) is disordered. The region spanning 1–409 (MLLPATGASR…VTQLHWEDDI (409 aa)) is the Protein kinase 1 domain. Residue Ser-131 is modified to Phosphoserine; by autocatalysis. Residues 144 to 199 (EDIDCKLMPPPPPPPGPVKKEKDQDGLTGEKVDFSSSSDSESEMGPQEAAQAESKD) form a disordered region. Positions 151 to 160 (MPPPPPPPGP) are enriched in pro residues. A compositionally biased stretch (basic and acidic residues) spans 161–176 (VKKEKDQDGLTGEKVD). Phosphoserine; by autocatalysis is present on Ser-302. Residues 509-530 (PDEKEEATSNSPSKENKKESSL) form a disordered region. The interval 512–971 (KEEATSNSPS…KIPNKPTQQK (460 aa)) is histone acetyltransferase (HAT). Lys-539 is subject to N6-acetyllysine. Glycyl lysine isopeptide (Lys-Gly) (interchain with G-Cter in SUMO2) cross-links involve residues Lys-544 and Lys-557. Disordered regions lie at residues 964-983 (PNKPTQQKDDKEPQPVKKTV) and 1228-1252 (RLKRNQEKEKLKGPPEKKPKKMKER). 2 stretches are compositionally biased toward basic and acidic residues: residues 969–978 (QQKDDKEPQP) and 1228–1244 (RLKRNQEKEKLKGPPEK). The HMG box DNA-binding region spans 1190 to 1268 (VRIRTTKDEE…CGACGAIGHM (79 aa)). The interval 1337–1624 (VLKFPKQQLP…TAKEAALEEA (288 aa)) is interaction with ASF1A and ASF1B. The Nuclear localization signal motif lies at 1346–1353 (PPKKKRRV). Bromo domains lie at 1371–1479 (RRRT…LKEK) and 1493–1602 (LLDD…LTEY). The Protein kinase 2 domain maps to 1420–1865 (MDLQTLRENV…AGDSDMDSDE (446 aa)). The tract at residues 1625–1865 (ELESLDPMTP…AGDSDMDSDE (241 aa)) is disordered. Pro residues predominate over residues 1633–1642 (TPGPYTPQPP). Polar residues predominate over residues 1646–1682 (DNSTSLSVSRDASVYQDESNMSVLDIPSATSEKQLTQ). Phosphoserine is present on residues Ser-1664 and Ser-1667. 2 stretches are compositionally biased toward acidic residues: residues 1683-1697 (EGEDGDGDLADEEEG) and 1715-1730 (EGEDDEEDAGSDEEGD). The segment covering 1739-1751 (SESGSDSDVGSGS) has biased composition (low complexity). Residues Ser-1773, Ser-1776, and Ser-1794 each carry the phosphoserine modification. Residues 1804-1814 (KSNTQDTSFSS) are compositionally biased toward polar residues. Over residues 1820-1829 (VSEEEEDEEE) the composition is skewed to acidic residues. Position 1821 is a phosphoserine (Ser-1821). The span at 1832–1841 (SGPSVLSQVH) shows a compositional bias: polar residues.

The protein belongs to the TAF1 family. In terms of assembly, component of the TFIID basal transcription factor complex, composed of TATA-box-binding protein TBP, and a number of TBP-associated factors (TAFs), including TAF1, TAF2, TAF3, TAF4, TAF5, TAF6, TAF7, TAF8, TAF9, TAF10, TAF11, TAF12 and TAF13. Interacts with TAF7; the interaction is direct. TAF1, when part of the TFIID complex, interacts with C-terminus of TP53. Part of a TFIID-containing RNA polymerase II pre-initiation complex that is composed of TBP and at least GTF2A1, GTF2A2, GTF2E1, GTF2E2, GTF2F1, GTF2H2, GTF2H3, GTF2H4, GTF2H5, GTF2B, TCEA1, ERCC2, ERCC3, TAF1, TAF2, TAF3, TAF4, TAF5, TAF6, TAF7, TAF8, TAF9, TAF10, TAF11, TAF12 and TAF13. Component of some MLL1/MLL complex, at least composed of the core components KMT2A/MLL1, ASH2L, HCFC1/HCF1, WDR5 and RBBP5, as well as the facultative components BACC1, CHD8, E2F6, HSP70, INO80C, KANSL1, LAS1L, MAX, MCRS1, MGA, KAT8/MOF, PELP1, PHF20, PRP31, RING2, RUVB1/TIP49A, RUVB2/TIP49B, SENP3, TAF1, TAF4, TAF6, TAF7, TAF9 and TEX10. RB1 interacts with the N-terminal domain of TAF1. Interacts with ASF1A and ASF1B. Interacts (via bromo domains) with acetylated lysine residues on the N-terminus of histone H1.4, H2A, H2B, H3 and H4 (in vitro). The cofactor is Mg(2+). In terms of processing, phosphorylated by casein kinase II in vitro.

Its subcellular location is the nucleus. It catalyses the reaction L-seryl-[protein] + ATP = O-phospho-L-seryl-[protein] + ADP + H(+). The enzyme catalyses L-threonyl-[protein] + ATP = O-phospho-L-threonyl-[protein] + ADP + H(+). It carries out the reaction L-lysyl-[protein] + acetyl-CoA = N(6)-acetyl-L-lysyl-[protein] + CoA + H(+). Its activity is regulated as follows. Autophosphorylates on Ser residues. Inhibited by retinoblastoma tumor suppressor protein, RB1. Binding to TAF1 or CIITA inhibits the histone acetyltransferase activity. Functionally, the TFIID basal transcription factor complex plays a major role in the initiation of RNA polymerase II (Pol II)-dependent transcription. TFIID recognizes and binds promoters with or without a TATA box via its subunit TBP, a TATA-box-binding protein, and promotes assembly of the pre-initiation complex (PIC). The TFIID complex consists of TBP and TBP-associated factors (TAFs), including TAF1, TAF2, TAF3, TAF4, TAF5, TAF6, TAF7, TAF8, TAF9, TAF10, TAF11, TAF12 and TAF13. TAF1 is the largest component and core scaffold of the TFIID complex, involved in nucleating complex assembly. TAF1 forms a promoter DNA binding subcomplex of TFIID, together with TAF7 and TAF2. Contains novel N- and C-terminal Ser/Thr kinase domains which can autophosphorylate or transphosphorylate other transcription factors. Phosphorylates TP53 on 'Thr-55' which leads to MDM2-mediated degradation of TP53. Phosphorylates GTF2A1 and GTF2F1 on Ser residues. Possesses DNA-binding activity. Essential for progression of the G1 phase of the cell cycle. In Mesocricetus auratus (Golden hamster), this protein is Transcription initiation factor TFIID subunit 1.